The following is a 214-amino-acid chain: Outer-membrane lipoprotein carrier protein (214 aa).

A signal peptide spans 1–24; that stretch reads MKIKLAFAVLLALCLSLSVMPVLA.

This sequence belongs to the LolA family. In terms of assembly, monomer.

It is found in the periplasm. In terms of biological role, participates in the translocation of lipoproteins from the inner membrane to the outer membrane. Only forms a complex with a lipoprotein if the residue after the N-terminal Cys is not an aspartate (The Asp acts as a targeting signal to indicate that the lipoprotein should stay in the inner membrane). The polypeptide is Outer-membrane lipoprotein carrier protein (Alkalilimnicola ehrlichii (strain ATCC BAA-1101 / DSM 17681 / MLHE-1)).